Reading from the N-terminus, the 371-residue chain is Queuine tRNA-ribosyltransferase (371 aa).

Residue aspartate 92 is the Proton acceptor of the active site. Substrate-binding positions include 92 to 96, aspartate 147, glutamine 190, and glycine 217; that span reads DSGGF. Residues 248-254 are RNA binding; that stretch reads GVGKPID. Catalysis depends on aspartate 267, which acts as the Nucleophile. The RNA binding; important for wobble base 34 recognition stretch occupies residues 272–276; the sequence is TRSGR.

The protein belongs to the queuine tRNA-ribosyltransferase family. In terms of assembly, homodimer. Within each dimer, one monomer is responsible for RNA recognition and catalysis, while the other monomer binds to the replacement base PreQ1.

The catalysed reaction is 7-aminomethyl-7-carbaguanine + guanosine(34) in tRNA = 7-aminomethyl-7-carbaguanosine(34) in tRNA + guanine. It functions in the pathway tRNA modification; tRNA-queuosine biosynthesis. In terms of biological role, catalyzes the base-exchange of a guanine (G) residue with the queuine precursor 7-aminomethyl-7-deazaguanine (PreQ1) at position 34 (anticodon wobble position) in tRNAs with GU(N) anticodons (tRNA-Asp, -Asn, -His and -Tyr). Catalysis occurs through a double-displacement mechanism. The nucleophile active site attacks the C1' of nucleotide 34 to detach the guanine base from the RNA, forming a covalent enzyme-RNA intermediate. The proton acceptor active site deprotonates the incoming PreQ1, allowing a nucleophilic attack on the C1' of the ribose to form the product. After dissociation, two additional enzymatic reactions on the tRNA convert PreQ1 to queuine (Q), resulting in the hypermodified nucleoside queuosine (7-(((4,5-cis-dihydroxy-2-cyclopenten-1-yl)amino)methyl)-7-deazaguanosine). The polypeptide is Queuine tRNA-ribosyltransferase (Caulobacter vibrioides (strain ATCC 19089 / CIP 103742 / CB 15) (Caulobacter crescentus)).